We begin with the raw amino-acid sequence, 118 residues long: Ribonuclease P protein component (118 aa).

The protein belongs to the RnpA family. As to quaternary structure, consists of a catalytic RNA component (M1 or rnpB) and a protein subunit.

It catalyses the reaction Endonucleolytic cleavage of RNA, removing 5'-extranucleotides from tRNA precursor.. RNaseP catalyzes the removal of the 5'-leader sequence from pre-tRNA to produce the mature 5'-terminus. It can also cleave other RNA substrates such as 4.5S RNA. The protein component plays an auxiliary but essential role in vivo by binding to the 5'-leader sequence and broadening the substrate specificity of the ribozyme. The polypeptide is Ribonuclease P protein component (Rickettsia rickettsii (strain Iowa)).